We begin with the raw amino-acid sequence, 368 residues long: Phospho-N-acetylmuramoyl-pentapeptide-transferase (368 aa).

10 consecutive transmembrane segments (helical) span residues 2 to 22 (IALIIGILTSLIITLVGTPLL), 51 to 71 (TLGGVVIVLAVVLGWCASALY), 80 to 100 (PTWAAILALFAMVSMGVLGFI), 116 to 136 (VGGKFFGQVVFATIFAVLALI), 166 to 186 (IVAIILFVIWVNFLMAAWTNA), 193 to 213 (LDGLCAGSSMIAFVGYAIIAM), 234 to 254 (PLDLGIIACCAAVACLGFLWY), 256 to 276 (CNPASIFMGDTGSLALGGLFA), 277 to 297 (ALSIITHTEFLAMIIGGLFVV), and 340 to 360 (FWIVELMFVITGLIIFYGNWV).

It belongs to the glycosyltransferase 4 family. MraY subfamily. Mg(2+) is required as a cofactor.

The protein resides in the cell membrane. It catalyses the reaction UDP-N-acetyl-alpha-D-muramoyl-L-alanyl-gamma-D-glutamyl-meso-2,6-diaminopimeloyl-D-alanyl-D-alanine + di-trans,octa-cis-undecaprenyl phosphate = di-trans,octa-cis-undecaprenyl diphospho-N-acetyl-alpha-D-muramoyl-L-alanyl-D-glutamyl-meso-2,6-diaminopimeloyl-D-alanyl-D-alanine + UMP. It functions in the pathway cell wall biogenesis; peptidoglycan biosynthesis. Functionally, catalyzes the initial step of the lipid cycle reactions in the biosynthesis of the cell wall peptidoglycan: transfers peptidoglycan precursor phospho-MurNAc-pentapeptide from UDP-MurNAc-pentapeptide onto the lipid carrier undecaprenyl phosphate, yielding undecaprenyl-pyrophosphoryl-MurNAc-pentapeptide, known as lipid I. This chain is Phospho-N-acetylmuramoyl-pentapeptide-transferase, found in Bifidobacterium animalis subsp. lactis (strain AD011).